Here is a 222-residue protein sequence, read N- to C-terminus: Small ribosomal subunit protein eS1 (222 aa).

It belongs to the eukaryotic ribosomal protein eS1 family.

The sequence is that of Small ribosomal subunit protein eS1 from Pyrobaculum neutrophilum (strain DSM 2338 / JCM 9278 / NBRC 100436 / V24Sta) (Thermoproteus neutrophilus).